We begin with the raw amino-acid sequence, 302 residues long: Aspartate carbamoyltransferase catalytic subunit (302 aa).

Residues Arg49 and Thr50 each coordinate carbamoyl phosphate. L-aspartate is bound at residue Lys77. Positions 99, 126, and 129 each coordinate carbamoyl phosphate. L-aspartate contacts are provided by Arg159 and Arg209. Ala250 and Pro251 together coordinate carbamoyl phosphate.

It belongs to the aspartate/ornithine carbamoyltransferase superfamily. ATCase family. Heterododecamer (2C3:3R2) of six catalytic PyrB chains organized as two trimers (C3), and six regulatory PyrI chains organized as three dimers (R2).

It catalyses the reaction carbamoyl phosphate + L-aspartate = N-carbamoyl-L-aspartate + phosphate + H(+). Its pathway is pyrimidine metabolism; UMP biosynthesis via de novo pathway; (S)-dihydroorotate from bicarbonate: step 2/3. In terms of biological role, catalyzes the condensation of carbamoyl phosphate and aspartate to form carbamoyl aspartate and inorganic phosphate, the committed step in the de novo pyrimidine nucleotide biosynthesis pathway. The sequence is that of Aspartate carbamoyltransferase catalytic subunit from Staphylococcus carnosus (strain TM300).